The chain runs to 98 residues: Aspartyl/glutamyl-tRNA(Asn/Gln) amidotransferase subunit C (98 aa).

The tract at residues 76-98 (QVLSGAPDAEDGRFKVPAILEED) is disordered.

The protein belongs to the GatC family. In terms of assembly, heterotrimer of A, B and C subunits.

The enzyme catalyses L-glutamyl-tRNA(Gln) + L-glutamine + ATP + H2O = L-glutaminyl-tRNA(Gln) + L-glutamate + ADP + phosphate + H(+). It carries out the reaction L-aspartyl-tRNA(Asn) + L-glutamine + ATP + H2O = L-asparaginyl-tRNA(Asn) + L-glutamate + ADP + phosphate + 2 H(+). Its function is as follows. Allows the formation of correctly charged Asn-tRNA(Asn) or Gln-tRNA(Gln) through the transamidation of misacylated Asp-tRNA(Asn) or Glu-tRNA(Gln) in organisms which lack either or both of asparaginyl-tRNA or glutaminyl-tRNA synthetases. The reaction takes place in the presence of glutamine and ATP through an activated phospho-Asp-tRNA(Asn) or phospho-Glu-tRNA(Gln). This Renibacterium salmoninarum (strain ATCC 33209 / DSM 20767 / JCM 11484 / NBRC 15589 / NCIMB 2235) protein is Aspartyl/glutamyl-tRNA(Asn/Gln) amidotransferase subunit C.